A 60-amino-acid chain; its full sequence is Disagregin (60 aa).

Residues 14-16 (RED) carry the Cell attachment site; atypical motif.

In terms of tissue distribution, expressed in salivary glands.

It is found in the secreted. In terms of biological role, tick salivary platelet aggregation inhibitor that plays an important part in the anti-hemostatic strategy of ticks. Inhibits fibrinogen interaction with platelets. Acts by binding (in a divalent metal ion dependent manner) to the glycoprotein IIb-IIIa receptor (ITGA2B/ITGB3) on the platelet surface and inhibits aggregation induced by ADP (IC(50)=99-104 nM), thrombin, collagen (IC(50)=64 nM) platelet-activating factor and collagen. Interacts to unstimulated platelets (Kd=42.5 nM) and to ADP-stimulated platelets (Kd=39.4 nM). In contrast to many disintegrins which only interact with the beta-3 subunit, interacts with the two subunits (alpha-IIb and beta-3). Under flow conditions, reduces and delays platelet adhesion, aggregation, and fibrin formation. This Ornithodoros moubata (Soft tick) protein is Disagregin.